The chain runs to 34 residues: Mu-conotoxin GS (34 aa).

Intrachain disulfides connect C2–C14, C9–C19, and C13–C27. A 4-hydroxyproline mark is found at P10 and P11. The residue at position 32 (E32) is a 4-carboxyglutamate.

Expressed by the venom duct.

Its subcellular location is the secreted. Functionally, mu-conotoxins block voltage-gated sodium channels (Nav). No effect was observed upon injections into mice and goldfish (25 ug). This chain is Mu-conotoxin GS, found in Conus geographus (Geography cone).